Reading from the N-terminus, the 23-residue chain is NLLQFNKMIKIMTKKNAFPFYTS.

Belongs to the phospholipase A2 family. Group II subfamily. Requires Ca(2+) as cofactor. Post-translationally, contains 7 disulfide bonds. As to expression, expressed by the venom gland.

The protein resides in the secreted. It catalyses the reaction a 1,2-diacyl-sn-glycero-3-phosphocholine + H2O = a 1-acyl-sn-glycero-3-phosphocholine + a fatty acid + H(+). Functionally, snake venom phospholipase A2 (PLA2) that shows myotoxic activities. PLA2 catalyzes the calcium-dependent hydrolysis of the 2-acyl groups in 3-sn-phosphoglycerides. The polypeptide is Basic phospholipase A2 Smb-N6 (Sistrurus miliarius barbouri (Dusky pigmy rattlesnake)).